Reading from the N-terminus, the 102-residue chain is MNRLKDLGTPRPRLAFMAACILLLATLPDFAQASGGLQRVNSFMAGIVTVLRGASVATVTIAIIWAGYKLLFRHADVLDVVRVVLAGLLIGASAEIARYLLT.

The signal sequence occupies residues 1 to 31; the sequence is MNRLKDLGTPRPRLAFMAACILLLATLPDFA. 2 helical membrane passes run 45-65 and 77-97; these read AGIVTVLRGASVATVTIAIIW and VLDVVRVVLAGLLIGASAEIA.

The protein belongs to the PtlA family.

The protein localises to the cell membrane. The chain is Type IV secretion system protein PtlA homolog (ptlA) from Bordetella bronchiseptica (strain ATCC BAA-588 / NCTC 13252 / RB50) (Alcaligenes bronchisepticus).